A 312-amino-acid chain; its full sequence is Pyridoxal kinase (312 aa).

The residue at position 1 (Met1) is an N-acetylmethionine. Positions 12 and 47 each coordinate pyridoxal. Thr47 provides a ligand contact to pyridoxal 5'-phosphate. At Ser59 the chain carries Phosphoserine. Asp113 serves as a coordination point for ATP. A Na(+)-binding site is contributed by Asp113. Asp118 lines the Mg(2+) pocket. Thr148 is a Na(+) binding site. 150-153 contributes to the ATP binding site; the sequence is NQFE. The residue at position 164 (Ser164) is a Phosphoserine. Thr186 contributes to the Na(+) binding site. 186–187 lines the ATP pocket; the sequence is TS. At Ser213 the chain carries Phosphoserine. Residues 226–228 and Thr233 contribute to the ATP site; that span reads VDA. A pyridoxal 5'-phosphate-binding site is contributed by 234–235; the sequence is GD. The active-site Proton acceptor is Asp235. At Ser285 the chain carries Phosphoserine.

The protein belongs to the pyridoxine kinase family. As to quaternary structure, homodimer. Mg(2+) serves as cofactor. Requires Zn(2+) as cofactor. Co(2+) is required as a cofactor. The cofactor is Mn(2+). In terms of tissue distribution, ubiquitous. Highly expressed in testis. In adult testis and spermatozoa.

The protein localises to the cytoplasm. It localises to the cytosol. It carries out the reaction pyridoxal + ATP = pyridoxal 5'-phosphate + ADP + H(+). The catalysed reaction is pyridoxamine + ATP = pyridoxamine 5'-phosphate + ADP + H(+). It catalyses the reaction pyridoxine + ATP = pyridoxine 5'-phosphate + ADP + H(+). It participates in cofactor metabolism; pyridoxal 5'-phosphate salvage; pyridoxal 5'-phosphate from pyridoxal: step 1/1. The protein operates within cofactor metabolism; pyridoxal 5'-phosphate salvage; pyridoxine 5'-phosphate from pyridoxine: step 1/1. Its pathway is cofactor metabolism; pyridoxal 5'-phosphate salvage; pyridoxamine 5'-phosphate from pyridoxamine: step 1/1. With respect to regulation, catalytic activity is inhibited competitively by 4-deoxypyridoxine, and is also inhibited by the benzodiazepine receptor ligands 1012S and ethyl-beta-carboline-3-carboxylate. Inhibited by ginkgotoxin, theophylline, lamotrigine, enprofylline, theobromine, and caffeine. Activity is increased in the presence of K(+)or Na(+). Functionally, catalyzes the phosphorylation of the dietary vitamin B6 vitamers pyridoxal (PL), pyridoxine (PN) and pyridoxamine (PM) to form pyridoxal 5'-phosphate (PLP), pyridoxine 5'-phosphate (PNP) and pyridoxamine 5'-phosphate (PMP), respectively. PLP is the active form of vitamin B6, and acts as a cofactor for over 140 different enzymatic reactions. This is Pyridoxal kinase from Homo sapiens (Human).